Reading from the N-terminus, the 153-residue chain is Ubiquitin/ISG15-conjugating enzyme E2 L6 (153 aa).

Positions 2–149 (TASKRVAKEL…AEEFTLQYGV (148 aa)) constitute a UBC core domain. The Glycyl thioester intermediate role is filled by Cys86.

This sequence belongs to the ubiquitin-conjugating enzyme family. As to quaternary structure, interacts with RNF19A, RNF19B and RNF144B. Interacts with FLT3 (tyrosine phosphorylated). In terms of processing, ISGylated.

It catalyses the reaction S-ubiquitinyl-[E1 ubiquitin-activating enzyme]-L-cysteine + [E2 ubiquitin-conjugating enzyme]-L-cysteine = [E1 ubiquitin-activating enzyme]-L-cysteine + S-ubiquitinyl-[E2 ubiquitin-conjugating enzyme]-L-cysteine.. It participates in protein modification; protein ubiquitination. Its function is as follows. Catalyzes the covalent attachment of ubiquitin to other proteins. Functions in the E6/E6-AP-induced ubiquitination of p53/TP53. Promotes ubiquitination and subsequent proteasomal degradation of FLT3. The sequence is that of Ubiquitin/ISG15-conjugating enzyme E2 L6 (Ube2l6) from Rattus norvegicus (Rat).